The chain runs to 315 residues: uncharacterized protein (315 aa).

Coiled-coil stretches lie at residues 184–212 (AGEE…TPEQ) and 238–275 (EEHR…YKEK).

This sequence belongs to the IIV-6 287R family.

This is an uncharacterized protein from Acheta domesticus (House cricket).